The primary structure comprises 178 residues: dCTP deaminase (178 aa).

DCTP contacts are provided by residues 99 to 104 (RSTWAR) and Asp-115. The Proton donor/acceptor role is filled by Glu-125. The dCTP site is built by Tyr-157 and Gln-164.

The protein belongs to the dCTP deaminase family. Homotrimer.

The enzyme catalyses dCTP + H2O + H(+) = dUTP + NH4(+). It functions in the pathway pyrimidine metabolism; dUMP biosynthesis; dUMP from dCTP (dUTP route): step 1/2. Catalyzes the deamination of dCTP to dUTP. The protein is dCTP deaminase of Aeropyrum pernix (strain ATCC 700893 / DSM 11879 / JCM 9820 / NBRC 100138 / K1).